Consider the following 240-residue polypeptide: Uridylate kinase (240 aa).

Residue 12–15 (KLSG) coordinates ATP. Residues 20-25 (GEDGFG) are involved in allosteric activation by GTP. UMP is bound at residue Gly54. Gly55 and Arg59 together coordinate ATP. UMP-binding positions include Asp74 and 135–142 (TGNPYFST). Residues Asn163, Tyr169, and Asp172 each contribute to the ATP site.

Belongs to the UMP kinase family. As to quaternary structure, homohexamer.

The protein resides in the cytoplasm. It catalyses the reaction UMP + ATP = UDP + ADP. It functions in the pathway pyrimidine metabolism; CTP biosynthesis via de novo pathway; UDP from UMP (UMPK route): step 1/1. Its activity is regulated as follows. Allosterically activated by GTP. Probably inhibited by UTP. Functionally, catalyzes the reversible phosphorylation of UMP to UDP. This Enterococcus faecalis (strain ATCC 700802 / V583) protein is Uridylate kinase (pyrH).